The sequence spans 511 residues: FAD-dependent monooxygenase AOL_s00215g279 (511 aa).

The first 17 residues, 1–17 (MRFTLYGLLGFASLLHA), serve as a signal peptide directing secretion. The region spanning 85 to 256 (CWVNPACIVS…TEFDLRTRYS (172 aa)) is the FAD-binding PCMH-type domain. Position 122 is a pros-8alpha-FAD histidine (His-122).

It belongs to the oxygen-dependent FAD-linked oxidoreductase family.

The protein operates within secondary metabolite biosynthesis; terpenoid biosynthesis. Functionally, FAD-dependent monooxygenase; part of the gene cluster that mediates the biosynthesis of sesquiterpenyl epoxy-cyclohexenoids (SECs) such as anthrobotrisins and arthrosporols, metabolites that possess a novel hybrid carbon skeleton consisting of a polyketide-derived epoxycyclohexenol combined with a terpenoid-derived monocyclic sesquiterpenol substructure (PKS-PTS hybrid). The SEC pathway plays an important role for fungal soil colonization via decreasing fungal nematode-capturing ability. Within the pathway, the FAD-dependent monooxygenase AOL_s00215g279 plays a role in the oxygenation of the phenol moiety, most likely in the epoxy formation. The pathway begins with the biosynthesis of 6-methylsalicylic acid (6-MSA), the first precursor of the polyketide-derived epoxycyclohexenol in arthrosporols, by the polyketide synthase (PKS) AOL_s00215g283 via condensation of 1 acetate and 3 malonate units. The 6-methylsalicylic acid decarboxylase AOL_s00215g281 then catalyzes the decarboxylation of 6-methylsalicylic acid to yield m-cresol. The cytochrome P450 monooxygenase AOL_s00215g282 further oxidizes m-cresol to yield toluquinol. With the assistance of the oxidoreductase AOL_s00215g277, the polyprenyl transferase AOL_s00215g276 catalyzes the farnesylation of toluquinol to produce farnesyl hydroquinone, the hybrid precursor for biosynthesis of SECs. Farnesyl hydroquinone undergoes epoxidation and then subsequent dehydrogenation to form farnesyl epoxy-quinone, the first and simplest SEC. The cytochrome P450 monooxygenase AOL_s00215g278 and the FAD-dependent monooxygenase AOL_s00215g279 might be involved in the oxygenation of the phenol moiety, most likely in the epoxy formation. The cytochrome P450 monooxygenases AOL_s00215g274 and AOL_s00215g280 are involved in specific regional ketone reductions at respectively C-4 and C-1 of farnesyl epoxy-quinone PubMed:33823587. This is FAD-dependent monooxygenase AOL_s00215g279 from Arthrobotrys oligospora (strain ATCC 24927 / CBS 115.81 / DSM 1491) (Nematode-trapping fungus).